Here is a 128-residue protein sequence, read N- to C-terminus: uncharacterized protein (128 aa).

This is an uncharacterized protein from Caenorhabditis elegans.